A 430-amino-acid polypeptide reads, in one-letter code: MVDRSDNAAESFDDAVEERVINEEYKIWKKNTPFLYDLVMTHALEWPSLTAQWLPDVTKQDGKDYSVHRLILGTHTSDEQNHLLIASVQLPSEDAQFDGSHYDNEKGEFGGFGSVCGKIEIEIKINHEGEVNRARYMPQNACVIATKTPSSDVLVFDYTKHPSKPEPSGECQPDLRLRGHQKEGYGLSWNPNLNGYLLSASDDHTICLWDINATPKEHRVIDAKNIFTGHTAVVEDVAWHLLHESLFGSVADDQKLMIWDTRNNNTSKPSHTVDAHTAEVNCLSFNPYSEFILATGSADKTVALWDLRNLKLKLHSFESHKDEIFQVQWSPHNETILASSGTDRRLHVWDLSKIGEEQSTEDAEDGPPELLFIHGGHTAKISDFSWNPNEPWIICSVSEDNIMQVWQMAENVYNDEEPEIPASELETNTA.

Phosphoserine is present on residues serine 11 and serine 100. WD repeat units lie at residues 126–159 (NHEGEVNRARYMPQNACVIATKTPSSDVLVFDYT), 179–210 (GHQKEGYGLSWNPNLNGYLLSASDDHTICLWD), 229–260 (GHTAVVEDVAWHLLHESLFGSVADDQKLMIWD), 275–306 (AHTAEVNCLSFNPYSEFILATGSADKTVALWD), 319–350 (SHKDEIFQVQWSPHNETILASSGTDRRLHVWD), and 376–407 (GHTAKISDFSWNPNEPWIICSVSEDNIMQVWQ).

The protein belongs to the WD repeat RBAP46/RBAP48/MSI1 family. Probably binds directly to helix 1 of the histone fold of histone H4, a region that is not accessible when H4 is in chromatin. Self associates. Associates with chromatin. Component of the CAF-1 complex, composed of Caf1-55, Caf1-105 and Caf1-180; within the CAF-1 complex, Caf1-180 interacts directly with both Caf1-55 and Caf1-105. Component of the NuRD complex, composed of at least Caf1-55, Mi-2, MTA1-like and HDAC1/Rpd3. Within the NuRD complex, Caf1-55 may interact directly with Mi-2, MTA1-like and HDAC1/Rpd3. The NuRD complex may also associate with the methyl-DNA binding protein MBD-like via Caf1-55 and Mi-2. Component of the NURF complex, composed of Caf1-55, E(bx), Nurf-38 and Iswi. Component of the polycomb repressive complex 2 (PRC2, also known as the Esc/E(Z) complex), composed of Caf1-55, esc, E(z), Su(z)12, and possibly pho. PRC2 associates with the accessory components Jarid2 and jing to form the PRC2 Jarid2-jing variant (PRC2.2). PRC2 may also associate with Pcl and HDAC1/Rpd3 during early embryogenesis. Interacts with Rbf and Rbf2. Component of the DREAM complex at least composed of Myb, Caf1-55, mip40, mip120, mip130, E2f2, Dp, Rbf, Rbf2, lin-52, HDAC1/Rpd3 and l(3)mbt.

The protein localises to the nucleus. In terms of biological role, core histone-binding subunit that may target chromatin assembly factors, chromatin remodeling factors and histone deacetylases to their histone substrates in a manner that is regulated by nucleosomal DNA. Component of several complexes which regulate chromatin metabolism. These include the chromatin assembly factor 1 (CAF-1) complex, which is required for chromatin assembly following DNA replication and DNA repair; the nucleosome remodeling and deacetylase complex (the NuRD complex), which promotes transcriptional repression by histone deacetylation and nucleosome remodeling; the nucleosome remodeling factor (NURF) complex, which catalyzes ATP-dependent nucleosome sliding and facilitates transcription of chromatin; and the polycomb group (PcG) repressor complex ESC-E(Z), which promotes repression of homeotic genes during development. Also required for transcriptional repression of E2F target genes by E2f2 and Rbf or Rbf2. The protein is Chromatin assembly factor 1 p55 subunit of Drosophila melanogaster (Fruit fly).